The following is a 419-amino-acid chain: Acyl-coenzyme A thioesterase 1 (419 aa).

Residues S232, D324, and H358 each act as charge relay system in the active site. The residue at position 416 (S416) is a Phosphoserine.

Belongs to the C/M/P thioester hydrolase family. As to quaternary structure, monomer. Expressed in liver.

The protein localises to the cytoplasm. It is found in the cytosol. The catalysed reaction is hexadecanoyl-CoA + H2O = hexadecanoate + CoA + H(+). It catalyses the reaction dodecanoyl-CoA + H2O = dodecanoate + CoA + H(+). It carries out the reaction tetradecanoyl-CoA + H2O = tetradecanoate + CoA + H(+). The enzyme catalyses decanoyl-CoA + H2O = decanoate + CoA + H(+). The catalysed reaction is octadecanoyl-CoA + H2O = octadecanoate + CoA + H(+). It catalyses the reaction eicosanoyl-CoA + H2O = eicosanoate + CoA + H(+). It carries out the reaction (9Z)-octadecenoyl-CoA + H2O = (9Z)-octadecenoate + CoA + H(+). The enzyme catalyses (9Z)-hexadecenoyl-CoA + H2O = (9Z)-hexadecenoate + CoA + H(+). The catalysed reaction is (9E)-octadecenoyl-CoA + H2O = (9E)-octadecenoate + CoA + H(+). The protein operates within lipid metabolism; fatty acid metabolism. Functionally, catalyzes the hydrolysis of acyl-CoAs into free fatty acids and coenzyme A (CoASH), regulating their respective intracellular levels. More active towards saturated and unsaturated long chain fatty acyl-CoAs (C12-C20). This Rattus norvegicus (Rat) protein is Acyl-coenzyme A thioesterase 1 (Acot1).